The sequence spans 338 residues: Anthranilate phosphoribosyltransferase (338 aa).

5-phospho-alpha-D-ribose 1-diphosphate is bound by residues glycine 78, 81 to 82 (GD), threonine 86, 88 to 91 (NIST), 106 to 114 (KHGNRSVSS), and serine 118. Glycine 78 provides a ligand contact to anthranilate. Serine 90 serves as a coordination point for Mg(2+). Asparagine 109 provides a ligand contact to anthranilate. Arginine 164 contributes to the anthranilate binding site. 2 residues coordinate Mg(2+): aspartate 223 and glutamate 224.

The protein belongs to the anthranilate phosphoribosyltransferase family. In terms of assembly, homodimer. The cofactor is Mg(2+).

The enzyme catalyses N-(5-phospho-beta-D-ribosyl)anthranilate + diphosphate = 5-phospho-alpha-D-ribose 1-diphosphate + anthranilate. It participates in amino-acid biosynthesis; L-tryptophan biosynthesis; L-tryptophan from chorismate: step 2/5. In terms of biological role, catalyzes the transfer of the phosphoribosyl group of 5-phosphorylribose-1-pyrophosphate (PRPP) to anthranilate to yield N-(5'-phosphoribosyl)-anthranilate (PRA). This Bacillus subtilis (strain 168) protein is Anthranilate phosphoribosyltransferase.